A 286-amino-acid polypeptide reads, in one-letter code: Flagellin FlaB2 (286 aa).

The protein belongs to the bacterial flagellin family. The flagellum consists of an outer layer composed of repeating units of FlaA around a core that contains several antigenically related polypeptides. Interacts with FliW; a synthetic peptide of FlaB1 (residues 229-247) partially blocks binding of this protein to FliW.

It is found in the periplasmic flagellum. The protein localises to the periplasm. Component of the core of the flagella. In Treponema pallidum (strain Nichols), this protein is Flagellin FlaB2.